A 1458-amino-acid polypeptide reads, in one-letter code: Probable serine/threonine-protein kinase yakA (1458 aa).

The span at 32 to 76 shows a compositional bias: low complexity; sequence NNSLNSNDNTNTTNNNNNNNNNNNNNNNNNNNNNNNNNINNNNNN. Residues 32–83 are disordered; sequence NNSLNSNDNTNTTNNNNNNNNNNNNNNNNNNNNNNNNNINNNNNNGGMVGVN. The region spanning 205–548 is the Protein kinase domain; that stretch reads YKVLDSLGQG…PMQAKEHPFI (344 aa). ATP is bound by residues 211-219 and K234; that span reads LGQGTFGQV. The active-site Proton acceptor is D332. 2 disordered regions span residues 441–462 and 545–571; these read HRHL…NGKP and HPFI…TYSQ. Positions 446–459 are enriched in low complexity; it reads SNSDDNNNNNNNNN. A coiled-coil region spans residues 588-643; the sequence is NQHQLFQQLQQQQQQQQQQQQQQQQQQQQQQQQQQQQQQHNQFQQQQQQQQQQQQS. Low complexity-rich tracts occupy residues 659-709, 791-800, 808-853, and 861-870; these read TPYT…SFNF, SWGSDSSSIS, QKQM…NNVN, and DIPSDSFSSS. Disordered stretches follow at residues 659-714 and 791-874; these read TPYT…NESF and SWGS…EGMD. The stretch at 878 to 927 forms a coiled coil; the sequence is NLYQQQQQQQQQQQQQQQQQQQQQQQQQQQQQQQQQQLQYQQQFQTLQDL. Disordered stretches follow at residues 930–1095, 1128–1161, 1233–1347, 1375–1399, and 1435–1458; these read EGEK…PQMI, NQQN…GGAI, DYRP…SYQY, QQQQ…KTSS, and QQLQ…YRET. Composition is skewed to low complexity over residues 961–988, 1016–1042, and 1064–1093; these read QQTN…QQQQ, QQFQ…RFMQ, and QPLH…FTPQ. Composition is skewed to polar residues over residues 1128-1158 and 1233-1245; these read NQQN…NSSG and DYRP…QSPP. 2 stretches are compositionally biased toward low complexity: residues 1246 to 1255 and 1264 to 1279; these read SSYNSNKSFY and NNNN…NFSN. The segment covering 1280-1291 has biased composition (polar residues); the sequence is SLLPSQQQNVIF. Low complexity predominate over residues 1292 to 1309; that stretch reads PQNSPPSSYNSSNSLSKS. Composition is skewed to polar residues over residues 1310 to 1321 and 1331 to 1344; these read GGNTVKNNSNTG and QRFN…SGGS. 2 coiled-coil regions span residues 1346–1383 and 1409–1442; these read QYQQ…KKDT and RYQY…QQQA.

Belongs to the protein kinase superfamily. CMGC Ser/Thr protein kinase family. MNB/DYRK subfamily.

Its subcellular location is the cytoplasm. It carries out the reaction L-seryl-[protein] + ATP = O-phospho-L-seryl-[protein] + ADP + H(+). The enzyme catalyses L-threonyl-[protein] + ATP = O-phospho-L-threonyl-[protein] + ADP + H(+). The catalysed reaction is L-tyrosyl-[protein] + ATP = O-phospho-L-tyrosyl-[protein] + ADP + H(+). General sensor of environmental conditions, such as heat stress, effecting changes through pkaC. Essential for survival to nitrosoative and oxidative stresses. Required for cell cycle control, not only at the onset but also during development (aggregation process and postaggregative development). The protein is Probable serine/threonine-protein kinase yakA (yakA) of Dictyostelium discoideum (Social amoeba).